We begin with the raw amino-acid sequence, 177 residues long: ATP synthase subunit delta (177 aa).

It belongs to the ATPase delta chain family. As to quaternary structure, F-type ATPases have 2 components, F(1) - the catalytic core - and F(0) - the membrane proton channel. F(1) has five subunits: alpha(3), beta(3), gamma(1), delta(1), epsilon(1). F(0) has three main subunits: a(1), b(2) and c(10-14). The alpha and beta chains form an alternating ring which encloses part of the gamma chain. F(1) is attached to F(0) by a central stalk formed by the gamma and epsilon chains, while a peripheral stalk is formed by the delta and b chains.

The protein localises to the cell inner membrane. F(1)F(0) ATP synthase produces ATP from ADP in the presence of a proton or sodium gradient. F-type ATPases consist of two structural domains, F(1) containing the extramembraneous catalytic core and F(0) containing the membrane proton channel, linked together by a central stalk and a peripheral stalk. During catalysis, ATP synthesis in the catalytic domain of F(1) is coupled via a rotary mechanism of the central stalk subunits to proton translocation. Functionally, this protein is part of the stalk that links CF(0) to CF(1). It either transmits conformational changes from CF(0) to CF(1) or is implicated in proton conduction. The polypeptide is ATP synthase subunit delta (Aliivibrio fischeri (strain MJ11) (Vibrio fischeri)).